A 639-amino-acid polypeptide reads, in one-letter code: ATP-dependent zinc metalloprotease FtsH (639 aa).

Over 1–15 (MDNEKQASPPPAAPP) the chain is Cytoplasmic. A helical membrane pass occupies residues 16 to 36 (LNWRYLLWIILLGIFLISWLG). Over 37 to 123 (NAGRQAGDEI…VQAKSEEPSL (87 aa)) the chain is Periplasmic. Residues 124-144 (WMQAIIGILPWFLILGLIFYV) traverse the membrane as a helical segment. Over 145–639 (SYRMQQRMMG…HNEAVATGAG (495 aa)) the chain is Cytoplasmic. 221-228 (GRPGTGKT) serves as a coordination point for ATP. H442 serves as a coordination point for Zn(2+). The active site involves E443. Residues H446 and D518 each contribute to the Zn(2+) site.

In the central section; belongs to the AAA ATPase family. This sequence in the C-terminal section; belongs to the peptidase M41 family. As to quaternary structure, homohexamer. Zn(2+) is required as a cofactor.

The protein resides in the cell inner membrane. Acts as a processive, ATP-dependent zinc metallopeptidase for both cytoplasmic and membrane proteins. Plays a role in the quality control of integral membrane proteins. The sequence is that of ATP-dependent zinc metalloprotease FtsH from Nitrosococcus oceani (strain ATCC 19707 / BCRC 17464 / JCM 30415 / NCIMB 11848 / C-107).